Here is a 640-residue protein sequence, read N- to C-terminus: RNA polymerase II elongation factor ELL2 (640 aa).

Disordered stretches follow at residues 172 to 202 (AVSD…STIS), 290 to 320 (KLNP…PQKR), and 343 to 490 (RVPP…EEDL). Composition is skewed to polar residues over residues 184-202 (TPMN…STIS) and 291-318 (LNPS…SSPQ). The segment covering 360 to 372 (AAGLPLPPAAAAI) has biased composition (low complexity). Residues 391–401 (IVNSNSNSPST) show a composition bias toward polar residues. Over residues 457–470 (MSHKKSKKKSKKHK) the composition is skewed to basic residues. Basic and acidic residues predominate over residues 471–490 (EKDQIKKHDIETIEEKEEDL). Ser-503 and Ser-580 each carry phosphoserine. The OCEL domain occupies 526–636 (PDYLIKYIAI…LIGEFDQQQA (111 aa)).

It belongs to the ELL/occludin family. Component of the super elongation complex (SEC), at least composed of EAF1, EAF2, CDK9, MLLT3/AF9, AFF (AFF1 or AFF4), the P-TEFb complex and ELL (ELL, ELL2 or ELL3). Component of the little elongation complex (LEC), at least composed of ELL (ELL, ELL2 or ELL3), ZC3H8, ICE1 and ICE2. Interacts with AFF4; the interaction is direct and leads to stabilize ELL2 and prevent ELL2 ubiquitination. Interacts with EAF1 and EAF2. In terms of processing, ubiquitinated by SIAH1, leading to its degradation by the proteasome. Interaction with AFF4 stabilizes ELL2 and prevents ELL2 ubiquitination.

The protein localises to the nucleus. Functionally, elongation factor component of the super elongation complex (SEC), a complex required to increase the catalytic rate of RNA polymerase II transcription by suppressing transient pausing by the polymerase at multiple sites along the DNA. Component of the little elongation complex (LEC), a complex required to regulate small nuclear RNA (snRNA) gene transcription by RNA polymerase II and III. Plays a role in immunoglobulin secretion in plasma cells: directs efficient alternative mRNA processing, influencing both proximal poly(A) site choice and exon skipping, as well as immunoglobulin heavy chain (IgH) alternative processing. Probably acts by regulating histone modifications accompanying transition from membrane-specific to secretory IgH mRNA expression. In Homo sapiens (Human), this protein is RNA polymerase II elongation factor ELL2 (ELL2).